The sequence spans 196 residues: Dimiconin (196 aa).

Residues 1–21 (MKTIIVVTIFGILTCAYPTDG) form the signal peptide. 2 N-linked (GlcNAc...) asparagine glycosylation sites follow: Asn-62 and Asn-187.

The protein belongs to the calycin superfamily. Triabin family. In terms of tissue distribution, salivary gland.

It is found in the secreted. Functionally, inhibits the intrinsic blood coagulation pathway by blocking the activation of host coagulation factor XII (F12) but not the enzymatic activity of activated F12. In Triatoma dimidiata (Kissing bug), this protein is Dimiconin.